A 188-amino-acid polypeptide reads, in one-letter code: Ribosome-recycling factor (188 aa).

This sequence belongs to the RRF family.

The protein resides in the cytoplasm. Responsible for the release of ribosomes from messenger RNA at the termination of protein biosynthesis. May increase the efficiency of translation by recycling ribosomes from one round of translation to another. In Dinoroseobacter shibae (strain DSM 16493 / NCIMB 14021 / DFL 12), this protein is Ribosome-recycling factor.